A 176-amino-acid chain; its full sequence is Large ribosomal subunit protein uL6 (176 aa).

It belongs to the universal ribosomal protein uL6 family. As to quaternary structure, part of the 50S ribosomal subunit.

This protein binds to the 23S rRNA, and is important in its secondary structure. It is located near the subunit interface in the base of the L7/L12 stalk, and near the tRNA binding site of the peptidyltransferase center. The chain is Large ribosomal subunit protein uL6 from Burkholderia mallei (strain NCTC 10247).